The primary structure comprises 416 residues: Queuine tRNA-ribosyltransferase accessory subunit 2 (416 aa).

C323, C325, C328, and H354 together coordinate Zn(2+).

Belongs to the queuine tRNA-ribosyltransferase family. QTRT2 subfamily. In terms of assembly, heterodimer of a catalytic subunit and an accessory subunit. Requires Zn(2+) as cofactor.

It localises to the cytoplasm. Its function is as follows. Non-catalytic subunit of the queuine tRNA-ribosyltransferase (TGT) that catalyzes the base-exchange of a guanine (G) residue with queuine (Q) at position 34 (anticodon wobble position) in tRNAs with GU(N) anticodons (tRNA-Asp, -Asn, -His and -Tyr), resulting in the hypermodified nucleoside queuosine (7-(((4,5-cis-dihydroxy-2-cyclopenten-1-yl)amino)methyl)-7-deazaguanosine). In Drosophila mojavensis (Fruit fly), this protein is Queuine tRNA-ribosyltransferase accessory subunit 2.